A 107-amino-acid polypeptide reads, in one-letter code: Phosphoribosyl-ATP pyrophosphatase (107 aa).

This sequence belongs to the PRA-PH family.

It localises to the cytoplasm. It catalyses the reaction 1-(5-phospho-beta-D-ribosyl)-ATP + H2O = 1-(5-phospho-beta-D-ribosyl)-5'-AMP + diphosphate + H(+). It functions in the pathway amino-acid biosynthesis; L-histidine biosynthesis; L-histidine from 5-phospho-alpha-D-ribose 1-diphosphate: step 2/9. This Bacillus mycoides (strain KBAB4) (Bacillus weihenstephanensis) protein is Phosphoribosyl-ATP pyrophosphatase.